The following is a 548-amino-acid chain: Membrane-associated tyrosine- and threonine-specific cdc2-inhibitory kinase (548 aa).

Residues 61–89 (PNKQRSWSQPRPQSVSFRSPQNKTPASKL) form a disordered region. Residues 63–85 (KQRSWSQPRPQSVSFRSPQNKTP) are compositionally biased toward polar residues. In terms of domain architecture, Protein kinase spans 103–353 (FKSICKLGRG…VDWLLSLPAI (251 aa)). ATP contacts are provided by residues 109–117 (LGRGSFGEV) and K132. Catalysis depends on D226, which acts as the Proton acceptor. Positions 231, 244, and 246 each coordinate Mg(2+). The short motif at 376–392 (VYQFIVWLLSFVFQWLN) is the Membrane-association motif element. The interval 464–523 (SPDLLSRPSLGSTSTPRNLSPEFSMRKRSALPLTPNVSRISQDSTGKSRSPSTSHSSSGF) is disordered. The span at 472-481 (SLGSTSTPRN) shows a compositional bias: polar residues. At T478 the chain carries Phosphothreonine; by CDK1. The span at 507 to 521 (STGKSRSPSTSHSSS) shows a compositional bias: low complexity.

The protein belongs to the protein kinase superfamily. Ser/Thr protein kinase family. WEE1 subfamily. Interacts with CDC2-CCNB1 complex. Interacts with Mos during oocyte maturation. In terms of processing, autophosphorylated. Phosphorylated on undefined residues by RSK2 and Mos kinases. Phosphorylation at Thr-478 by cdk1 creates a docking site for plk1/plx1, leading to subsequent phosphorylation by plk1/plk1 and inhibition of the protein kinase activity kinase activity.

The protein resides in the endoplasmic reticulum membrane. It is found in the golgi apparatus membrane. The enzyme catalyses L-seryl-[protein] + ATP = O-phospho-L-seryl-[protein] + ADP + H(+). It catalyses the reaction L-threonyl-[protein] + ATP = O-phospho-L-threonyl-[protein] + ADP + H(+). With respect to regulation, negatively regulated by hyperphosphorylation during mitosis. The plk1/plk1 protein kinase may be required for mitotic phosphorylation. Inactivated during oocyte maturation by phosphorylation by RSK2 and Mos kinase. Acts as a negative regulator of entry into mitosis (G2 to M transition) by phosphorylation of the CDK1 kinase specifically when CDK1 is complexed to cyclins. Mediates phosphorylation of CDK1 predominantly on 'Thr-14'. Also involved in Golgi fragmentation. May be involved in phosphorylation of CDK1 on 'Tyr-15' to a lesser degree, however tyrosine kinase activity is unclear and may be indirect. The protein is Membrane-associated tyrosine- and threonine-specific cdc2-inhibitory kinase (pkmyt1) of Xenopus laevis (African clawed frog).